Reading from the N-terminus, the 243-residue chain is 2-C-methyl-D-erythritol 4-phosphate cytidylyltransferase (243 aa).

This sequence belongs to the IspD/TarI cytidylyltransferase family. IspD subfamily.

The catalysed reaction is 2-C-methyl-D-erythritol 4-phosphate + CTP + H(+) = 4-CDP-2-C-methyl-D-erythritol + diphosphate. The protein operates within isoprenoid biosynthesis; isopentenyl diphosphate biosynthesis via DXP pathway; isopentenyl diphosphate from 1-deoxy-D-xylulose 5-phosphate: step 2/6. In terms of biological role, catalyzes the formation of 4-diphosphocytidyl-2-C-methyl-D-erythritol from CTP and 2-C-methyl-D-erythritol 4-phosphate (MEP). This Aeromonas hydrophila subsp. hydrophila (strain ATCC 7966 / DSM 30187 / BCRC 13018 / CCUG 14551 / JCM 1027 / KCTC 2358 / NCIMB 9240 / NCTC 8049) protein is 2-C-methyl-D-erythritol 4-phosphate cytidylyltransferase.